We begin with the raw amino-acid sequence, 294 residues long: Small ribosomal subunit biogenesis GTPase RsgA 2, mitochondrial (294 aa).

The transit peptide at 1-68 directs the protein to the mitochondrion; sequence MQTFSSAAAL…RSFLAPVLPL (68 aa). Residues 155-294 form the CP-type G domain; the sequence is VSEVLDPPVA…VSFFLSYFIL (140 aa). 255–263 is a GTP binding site; that stretch reads GPSGVGKSS.

Belongs to the TRAFAC class YlqF/YawG GTPase family.

The protein localises to the mitochondrion. This Arabidopsis thaliana (Mouse-ear cress) protein is Small ribosomal subunit biogenesis GTPase RsgA 2, mitochondrial.